The sequence spans 318 residues: D-alanine--D-alanine ligase (318 aa).

Positions 116–311 constitute an ATP-grasp domain; sequence KQVWQSLGIP…FQQLVLAILA (196 aa). Position 142-197 (142-197) interacts with ATP; sequence SAELGFPLIVKPAHEGSSIGMAKVNSEQELVAAWKDAAKYDSQVLVEQWIHGPEFT. Mg(2+) is bound by residues Asp-265, Glu-278, and Asn-280.

Belongs to the D-alanine--D-alanine ligase family. Mg(2+) is required as a cofactor. Mn(2+) serves as cofactor.

The protein localises to the cytoplasm. The catalysed reaction is 2 D-alanine + ATP = D-alanyl-D-alanine + ADP + phosphate + H(+). Its pathway is cell wall biogenesis; peptidoglycan biosynthesis. In terms of biological role, cell wall formation. This chain is D-alanine--D-alanine ligase, found in Pseudomonas entomophila (strain L48).